Reading from the N-terminus, the 248-residue chain is UPF0736 protein BCAH187_A1335 (248 aa).

This sequence belongs to the UPF0736 family.

This Bacillus cereus (strain AH187) protein is UPF0736 protein BCAH187_A1335.